We begin with the raw amino-acid sequence, 596 residues long: MEEQSKNKISEEEKQLHGRPNRPKGGLITMPFIFANEICEKLAVVGFHANMISYLTTQLHLPLTKAANTLTNFAGTSSLTPLLGAFIADSFAGRFWTITFASIIYQIGMTLLTISAIIPTLRPPPCKGEEVCVVADTAQLSILYVALLLGALGSGGIRPCVVAFGADQFDESDPNQTTKTWNYFNWYYFCMGAAVLLAVTVLVWIQDNVGWGLGLGIPTVAMFLSVIAFVGGFQLYRHLVPAGSPFTRLIQVGVAAFRKRKLRMVSDPSLLYFNDEIDAPISLGGKLTHTKHMSFLDKAAIVTEEDNLKPGQIPNHWRLSTVHRVEELKSVIRMGPIGASGILLITAYAQQGTFSLQQAKTMNRHLTNSFQIPAGSMSVFTTVAMLTTIIFYDRVFVKVARKFTGLERGITFLHRMGIGFVISIIATLVAGFVEVKRKSVAIEHGLLDKPHTIVPISFLWLIPQYGLHGVAEAFMSIGHLEFFYDQAPESMRSTATALFWMAISIGNYVSTLLVTLVHKFSAKPDGSNWLPDNNLNRGRLEYFYWLITVLQAVNLVYYLWCAKIYTYKPVQVHHSKEDSSPVKEELQLSNRSLVDE.

Residues Met1–Leu16 are compositionally biased toward basic and acidic residues. Residues Met1–Pro23 form a disordered region. 12 helical membrane-spanning segments follow: residues Leu27–Phe47, Phe73–Gly93, Ile98–Ile118, Thr137–Ile157, Asn185–Ile205, Leu213–Phe233, Met334–Phe354, Ile372–Tyr392, Met416–Lys436, Ile453–Ala473, Ala497–Val517, and Tyr542–Ala562.

Belongs to the major facilitator superfamily. Proton-dependent oligopeptide transporter (POT/PTR) (TC 2.A.17) family. In terms of tissue distribution, expressed in shoots, stems, leaves, flowers and siliques.

The protein localises to the membrane. Functionally, may act as an efflux-type nitrite transporter. Not regulated by the PII protein involved in the regulation of nitrite uptake into higher plant chloroplasts. The protein is Protein NRT1/ PTR FAMILY 3.1 (NPF3.1) of Arabidopsis thaliana (Mouse-ear cress).